Here is a 544-residue protein sequence, read N- to C-terminus: MATEEIHSLYDTILILDFGSQYSHLITRRCRELNVYCEMLPCTQKISELSWKPKGIILSGSPYSVYAPDAPHVDPDVFTLGVPILGICYGLQEIARVHGGTVDAHTHREYGYAKIEVVKTGKKDQDALFEGIEMEADGGLQVWMSHGDQLTSLPPNFVTIASTPTSPFTSVAHESKPIYGVQFHPEVSHSPRGKEVIAAFVKNVCGVRDGWSMESFIPKEIARIRQICGEKGQVIGAVSGGVDSTVAAKLMHEAIGDRFHAIMVDNGVLRKDEAKKVHKMLTVDLGVNLTVIDASELFLARLKGVEDPERKRKIIGNTFIEVFEAEAAKLEAAAEKELAEKGGEAKGKIEWLLQGTLYPDVIESISFKGPSATIKTHHNVGGLLEDMKLKLIEPLRELFKDEVRALGRLLNIPEHLVGRHPFPGPGLAIRILGEVTREQIAILQHADDIYIEEIRAAGLYDQISQAFVALLPVKAVGVAGDARTYDQVVAVRAVSTEDFMTADWFVFPPQVLKRISSRITNEVKGVNRVVYDITSKPPGTVEWL.

One can recognise a Glutamine amidotransferase type-1 domain in the interval 12-210 (TILILDFGSQ…VKNVCGVRDG (199 aa)). The active-site Nucleophile is Cys88. Active-site residues include His184 and Glu186. In terms of domain architecture, GMPS ATP-PPase spans 211-419 (WSMESFIPKE…LNIPEHLVGR (209 aa)). An ATP-binding site is contributed by 239 to 245 (SGGVDST). Positions 312, 481, 536, and 542 each coordinate XMP.

In terms of assembly, homodimer. Also forms a small population of homotetramers. It depends on Mg(2+) as a cofactor.

It localises to the cytoplasm. The protein localises to the cytosol. The enzyme catalyses XMP + L-glutamine + ATP + H2O = GMP + L-glutamate + AMP + diphosphate + 2 H(+). Its pathway is purine metabolism; GMP biosynthesis; GMP from XMP (L-Gln route): step 1/1. Its activity is regulated as follows. The enzyme is inhibited by ECC1385; although this compound fails to inhibit growth of the organism. Catalyzes the conversion of xanthine monophosphate (XMP) to GMP in the presence of glutamine and ATP through an adenyl-XMP intermediate. The chain is GMP synthase [glutamine-hydrolyzing] from Cryptococcus neoformans var. grubii serotype A (strain H99 / ATCC 208821 / CBS 10515 / FGSC 9487) (Filobasidiella neoformans var. grubii).